A 286-amino-acid polypeptide reads, in one-letter code: Acetyl-coenzyme A carboxylase carboxyl transferase subunit beta (286 aa).

One can recognise a CoA carboxyltransferase N-terminal domain in the interval 23–286 (IWVKCNNCNQ…ITNKPEPKKE (264 aa)). Zn(2+) is bound by residues cysteine 27, cysteine 30, cysteine 46, and cysteine 49. The C4-type zinc-finger motif lies at 27–49 (CNNCNQMIYKIELEKNLEVCPKC).

This sequence belongs to the AccD/PCCB family. As to quaternary structure, acetyl-CoA carboxylase is a heterohexamer composed of biotin carboxyl carrier protein (AccB), biotin carboxylase (AccC) and two subunits each of ACCase subunit alpha (AccA) and ACCase subunit beta (AccD). Zn(2+) is required as a cofactor.

Its subcellular location is the cytoplasm. The enzyme catalyses N(6)-carboxybiotinyl-L-lysyl-[protein] + acetyl-CoA = N(6)-biotinyl-L-lysyl-[protein] + malonyl-CoA. The protein operates within lipid metabolism; malonyl-CoA biosynthesis; malonyl-CoA from acetyl-CoA: step 1/1. Component of the acetyl coenzyme A carboxylase (ACC) complex. Biotin carboxylase (BC) catalyzes the carboxylation of biotin on its carrier protein (BCCP) and then the CO(2) group is transferred by the transcarboxylase to acetyl-CoA to form malonyl-CoA. The polypeptide is Acetyl-coenzyme A carboxylase carboxyl transferase subunit beta (Wigglesworthia glossinidia brevipalpis).